The following is a 162-amino-acid chain: Interleukin-15 (162 aa).

Residues 1-29 form the signal peptide; sequence MRISKPHLRITSIQCYVCLLLNTHFLTEA. Positions 30 to 48 are excised as a propeptide; that stretch reads GIRVFILGCISAGIPKTEA. Cystine bridges form between cysteine 83/cysteine 133 and cysteine 90/cysteine 136. Residues asparagine 119, asparagine 127, and asparagine 143 are each glycosylated (N-linked (GlcNAc...) asparagine).

It belongs to the IL-15/IL-21 family.

It is found in the secreted. Its function is as follows. Cytokine that plays a major role in the development of inflammatory and protective immune responses to microbial invaders and parasites by modulating immune cells of both the innate and adaptive immune systems. Stimulates the proliferation of natural killer cells, T-cells and B-cells and promotes the secretion of several cytokines. In monocytes, induces the production of IL8 and monocyte chemotactic protein 1/CCL2, two chemokines that attract neutrophils and monocytes respectively to sites of infection. Unlike most cytokines, which are secreted in soluble form, IL15 is expressed in association with its high affinity IL15RA on the surface of IL15-producing cells and delivers signals to target cells that express IL2RB and IL2RG receptor subunits. Binding to its receptor triggers the phosphorylation of JAK1 and JAK3 and the recruitment and subsequent phosphorylation of signal transducer and activator of transcription-3/STAT3 and STAT5. In mast cells, induces the rapid tyrosine phosphorylation of STAT6 and thereby controls mast cell survival and release of cytokines such as IL4. The chain is Interleukin-15 (IL15) from Marmota monax (Woodchuck).